The primary structure comprises 187 residues: ATP-dependent protease subunit HslV (187 aa).

The active site involves threonine 13. Na(+)-binding residues include alanine 172, cysteine 175, and threonine 178.

It belongs to the peptidase T1B family. HslV subfamily. In terms of assembly, a double ring-shaped homohexamer of HslV is capped on each side by a ring-shaped HslU homohexamer. The assembly of the HslU/HslV complex is dependent on binding of ATP.

The protein localises to the cytoplasm. It catalyses the reaction ATP-dependent cleavage of peptide bonds with broad specificity.. Its activity is regulated as follows. Allosterically activated by HslU binding. Functionally, protease subunit of a proteasome-like degradation complex believed to be a general protein degrading machinery. The sequence is that of ATP-dependent protease subunit HslV from Caulobacter sp. (strain K31).